Reading from the N-terminus, the 466-residue chain is Arginine biosynthesis bifunctional protein ArgJ, mitochondrial (466 aa).

The N-terminal 9 residues, 1-9, are a transit peptide targeting the mitochondrion; sequence MSSLVLKRF. Residues Thr-183, Lys-209, Thr-232, Glu-320, Asn-461, and Ser-466 each contribute to the substrate site. The Nucleophile role is filled by Thr-232.

It belongs to the ArgJ family. Heterodimer of an alpha and a beta chain. Post-translationally, the alpha and beta chains are autoproteolytically processed from a single precursor protein within the mitochondrion.

It is found in the mitochondrion matrix. The enzyme catalyses N(2)-acetyl-L-ornithine + L-glutamate = N-acetyl-L-glutamate + L-ornithine. The catalysed reaction is L-glutamate + acetyl-CoA = N-acetyl-L-glutamate + CoA + H(+). It participates in amino-acid biosynthesis; L-arginine biosynthesis; L-ornithine and N-acetyl-L-glutamate from L-glutamate and N(2)-acetyl-L-ornithine (cyclic): step 1/1. Its pathway is amino-acid biosynthesis; L-arginine biosynthesis; N(2)-acetyl-L-ornithine from L-glutamate: step 1/4. Catalyzes two activities which are involved in the cyclic version of arginine biosynthesis: the synthesis of acetylglutamate from glutamate and acetyl-CoA, and of ornithine by transacetylation between acetylornithine and glutamate. This chain is Arginine biosynthesis bifunctional protein ArgJ, mitochondrial, found in Laccaria bicolor (strain S238N-H82 / ATCC MYA-4686) (Bicoloured deceiver).